We begin with the raw amino-acid sequence, 207 residues long: Guanylate kinase (207 aa).

One can recognise a Guanylate kinase-like domain in the interval 4-184 (GTLYIVSAPS…ALSDLKTIIR (181 aa)). 11-18 (APSGAGKS) contacts ATP.

The protein belongs to the guanylate kinase family.

It is found in the cytoplasm. The catalysed reaction is GMP + ATP = GDP + ADP. Essential for recycling GMP and indirectly, cGMP. The sequence is that of Guanylate kinase from Salmonella paratyphi A (strain ATCC 9150 / SARB42).